A 461-amino-acid chain; its full sequence is Cysteine--tRNA ligase (461 aa).

Zn(2+) is bound at residue cysteine 28. The short motif at 30–40 is the 'HIGH' region element; sequence ITVYDLCHIGH. 3 residues coordinate Zn(2+): cysteine 209, histidine 234, and glutamate 238. Positions 266-270 match the 'KMSKS' region motif; the sequence is KMSKS. Position 269 (lysine 269) interacts with ATP.

The protein belongs to the class-I aminoacyl-tRNA synthetase family. As to quaternary structure, monomer. Zn(2+) is required as a cofactor.

It is found in the cytoplasm. The catalysed reaction is tRNA(Cys) + L-cysteine + ATP = L-cysteinyl-tRNA(Cys) + AMP + diphosphate. This chain is Cysteine--tRNA ligase, found in Escherichia coli (strain SMS-3-5 / SECEC).